Reading from the N-terminus, the 140-residue chain is MTFQTLSSENNELLTIASESFLKRWAFSEQRLTVDLMTSDDDELTVYIETDLVQSSPIYLNEDLNICRLSIQDMHEILAVQHGYYVPPSRFGDLMKYSSECYSFFYGRKSDFKYLASFIGYEKYIACPIRFLEDISWRIR.

Functionally, putative immunity protein component of a toxin-immunity protein module, which may function as a cellular contact-dependent growth inhibition (CDI) system. Blocks the toxic effects of expression of the C-terminus (residues 1519-1658) of cognate toxin RhsC in E.coli. This Dickeya dadantii (strain 3937) (Erwinia chrysanthemi (strain 3937)) protein is Immunity protein RhsIC (rhsIC).